The following is an 829-amino-acid chain: Telomere length regulation protein TEL2 homolog (829 aa).

2 disordered regions span residues 446–493 and 620–641; these read SADF…DDLV and SEKP…PHSI. The span at 456-466 shows a compositional bias: low complexity; that stretch reads SSPSKSPLSSP. Basic and acidic residues predominate over residues 467–480; that stretch reads EVREKSKVKVKADQ. Acidic residues predominate over residues 482-493; sequence SDSDLDSDDDLV. Positions 629–641 are enriched in polar residues; the sequence is AESGSVNTDPHSI.

The protein belongs to the TEL2 family.

It is found in the cytoplasm. It localises to the membrane. Its subcellular location is the nucleus. The protein localises to the chromosome. The protein resides in the telomere. Regulator of the DNA damage response (DDR). Part of the TTT complex that is required to stabilize protein levels of the phosphatidylinositol 3-kinase-related protein kinase (PIKK) family proteins. Promotes assembly, stabilizes and maintains the activity of TORC complexes, which regulate cell growth and survival in response to nutrient and hormonal signals. May be involved in telomere length regulation. The chain is Telomere length regulation protein TEL2 homolog (telo2) from Xenopus tropicalis (Western clawed frog).